The following is a 561-amino-acid chain: Type II methyltransferase M.BstVI (561 aa).

It belongs to the N(4)/N(6)-methyltransferase family.

It catalyses the reaction a 2'-deoxyadenosine in DNA + S-adenosyl-L-methionine = an N(6)-methyl-2'-deoxyadenosine in DNA + S-adenosyl-L-homocysteine + H(+). Functionally, a gamma subtype methylase, recognizes the double-stranded sequence 5'-CTCGAG-3', methylates A-5 on both strands, and protects the DNA from cleavage by the BstVI endonuclease. The protein is Type II methyltransferase M.BstVI of Geobacillus stearothermophilus (Bacillus stearothermophilus).